The primary structure comprises 345 residues: L-threonine 3-dehydrogenase (345 aa).

Cys-39 provides a ligand contact to Zn(2+). Residues Thr-41 and His-44 each act as charge relay system in the active site. The Zn(2+) site is built by His-64, Glu-65, Cys-94, Cys-97, Cys-100, and Cys-108. Residues Ile-176, Asp-196, Arg-201, 263–265 (LGI), and 287–288 (VY) contribute to the NAD(+) site.

The protein belongs to the zinc-containing alcohol dehydrogenase family. In terms of assembly, homotetramer. The cofactor is Zn(2+).

It localises to the cytoplasm. It carries out the reaction L-threonine + NAD(+) = (2S)-2-amino-3-oxobutanoate + NADH + H(+). The protein operates within amino-acid degradation; L-threonine degradation via oxydo-reductase pathway; glycine from L-threonine: step 1/2. In terms of biological role, catalyzes the NAD(+)-dependent oxidation of L-threonine to 2-amino-3-ketobutyrate. In Anaeromyxobacter sp. (strain K), this protein is L-threonine 3-dehydrogenase.